A 743-amino-acid chain; its full sequence is Threonine--tRNA ligase (743 aa).

The segment covering 1 to 15 (MSADSPSSPASSQAA) has biased composition (low complexity). A disordered region spans residues 1 to 30 (MSADSPSSPASSQAAEVQVRLPDGSLKTQP). Residues 13–76 (QAAEVQVRLP…GEIADDENVV (64 aa)) form the TGS domain. The interval 264–619 (DHRVLGKQHG…LIEHFAGAFP (356 aa)) is catalytic. Residues 354 to 404 (AWSTRLDKDDLSKDDEDKLIAAAEVFGVKLPDYKPSASNDAKKDVLHRWQL) are insert. Zn(2+) is bound by residues cysteine 416, histidine 467, and histidine 596.

It belongs to the class-II aminoacyl-tRNA synthetase family. In terms of assembly, homodimer. It depends on Zn(2+) as a cofactor.

The protein resides in the cytoplasm. It carries out the reaction tRNA(Thr) + L-threonine + ATP = L-threonyl-tRNA(Thr) + AMP + diphosphate + H(+). In terms of biological role, catalyzes the attachment of threonine to tRNA(Thr) in a two-step reaction: L-threonine is first activated by ATP to form Thr-AMP and then transferred to the acceptor end of tRNA(Thr). Also edits incorrectly charged L-seryl-tRNA(Thr). This chain is Threonine--tRNA ligase, found in Rhodopirellula baltica (strain DSM 10527 / NCIMB 13988 / SH1).